The chain runs to 547 residues: Natural resistance-associated macrophage protein 1 (547 aa).

The interval 1–30 is disordered; the sequence is MTGDKDPQSVSRPNYGSISHPPSSEPQQEP. The Cytoplasmic portion of the chain corresponds to 1 to 54; sequence MTGDKDPQSVSRPNYGSISHPPSSEPQQEPLRTTYLSEKIPIPDTEPGTFSLRK. A compositionally biased stretch (polar residues) spans 8 to 17; the sequence is QSVSRPNYGS. Low complexity predominate over residues 21 to 30; sequence PPSSEPQQEP. A helical transmembrane segment spans residues 55 to 75; that stretch reads LWAFTGPGFLMSIAFLDPGNI. The Extracellular segment spans residues 76 to 81; sequence ESDLQA. Residues 82–102 form a helical membrane-spanning segment; sequence GAVAGFKLLWVLLWATVLGLL. At 103 to 139 the chain is on the cytoplasmic side; that stretch reads CQRLAARLGVVTGKDLGEICHLYYPKVPRTLLWLTIE. A helical membrane pass occupies residues 140-160; the sequence is LAIVGSDMQEVIGTAIAFSLL. Over 161–164 the chain is Extracellular; the sequence is SAGR. Residues 165 to 185 form a helical membrane-spanning segment; the sequence is IPLWGGVLITIVDTFFFLFLD. At 186–193 the chain is on the cytoplasmic side; it reads NYGLRKLE. A helical membrane pass occupies residues 194–214; that stretch reads AFFGILITIMALTFGYEYVVA. Topologically, residues 215–240 are extracellular; that stretch reads RPAQVALLQGLLLPSCPGCGRPELLQ. A helical transmembrane segment spans residues 241 to 261; sequence AVGIVGAIIMPHNIYLHSALV. Topologically, residues 262–286 are cytoplasmic; that stretch reads KSREIDRSRRPDIREANMYFLIEAS. The helical transmembrane segment at 287-307 threads the bilayer; it reads IALSVSFFINLFVVAVFGQAF. Residues 308–346 are Extracellular-facing; sequence YQQTNEAAFNVCANSSLHDYAKIFPRNNLTVEVDIYQGG. Asn321 and Asn335 each carry an N-linked (GlcNAc...) asparagine glycan. A helical membrane pass occupies residues 347 to 367; sequence VMLGCVFGPAALYIWAVGLLA. Topologically, residues 368–394 are cytoplasmic; that stretch reads AGQSSTMTGTYAGQFVMEGFLRLRWSR. The helical transmembrane segment at 395–415 threads the bilayer; the sequence is FARVLLTRSCAILPTVLVVVF. Residues 416–432 lie on the Extracellular side of the membrane; sequence RDLKDLSGLNDLLNVLQ. The helical transmembrane segment at 433–453 threads the bilayer; it reads SLLLPFAVLPILTFTSMPALM. Over 454 to 464 the chain is Cytoplasmic; sequence QEFANGRLSKA. Residues 465–485 form a helical membrane-spanning segment; that stretch reads ITSFIMALVCAINLYFVVIYL. Topologically, residues 486-492 are extracellular; the sequence is PSLPHPA. The chain crosses the membrane as a helical span at residues 493 to 513; the sequence is YFILVALLAIVYLGLTTYLVW. At 514–547 the chain is on the cytoplasmic side; it reads TCFIAHGVTLLAHSSHQHFLYGLPDVEEKGKISG.

The protein belongs to the NRAMP family.

It is found in the late endosome membrane. It localises to the lysosome membrane. It carries out the reaction Zn(2+)(in) + H(+)(out) = Zn(2+)(out) + H(+)(in). It catalyses the reaction Fe(2+)(in) + H(+)(out) = Fe(2+)(out) + H(+)(in). The enzyme catalyses Mn(2+)(in) + H(+)(out) = Mn(2+)(out) + H(+)(in). In terms of biological role, macrophage-specific antiporter that fluxes metal ions in either direction against a proton gradient. Localized to late endosomal lysosomal membranes, delivers bivalent cations from the cytosol into these acidic compartments where they may directly affect antimicrobial activity. Involved in iron metabolism and host natural resistance to infection with intracellular parasites. Pathogen resistance involves sequestration of Fe(2+) and Mn(2+), cofactors of both prokaryotic and eukaryotic catalases and superoxide dismutases, not only to protect the macrophage against its own generation of reactive oxygen species, but to deny the cations to the pathogen for synthesis of its protective enzymes. In Canis lupus familiaris (Dog), this protein is Natural resistance-associated macrophage protein 1 (SLC11A1).